Consider the following 78-residue polypeptide: Acyl carrier protein (78 aa).

One can recognise a Carrier domain in the interval 1–76 (MALFEDIQAV…DVVKYIEDNK (76 aa)). Serine 36 bears the O-(pantetheine 4'-phosphoryl)serine mark.

Belongs to the acyl carrier protein (ACP) family. In terms of processing, 4'-phosphopantetheine is transferred from CoA to a specific serine of apo-ACP by AcpS. This modification is essential for activity because fatty acids are bound in thioester linkage to the sulfhydryl of the prosthetic group.

It localises to the cytoplasm. The protein operates within lipid metabolism; fatty acid biosynthesis. In terms of biological role, carrier of the growing fatty acid chain in fatty acid biosynthesis. The chain is Acyl carrier protein from Helicobacter pylori (strain J99 / ATCC 700824) (Campylobacter pylori J99).